The sequence spans 60 residues: Large ribosomal subunit protein bL33 (60 aa).

This sequence belongs to the bacterial ribosomal protein bL33 family.

The protein is Large ribosomal subunit protein bL33 of Pelodictyon phaeoclathratiforme (strain DSM 5477 / BU-1).